Here is a 552-residue protein sequence, read N- to C-terminus: CTP synthase (552 aa).

Positions 1-270 are amidoligase domain; it reads MTKYVFVTGG…DRIICEELKL (270 aa). Residue Ser13 coordinates CTP. Ser13 contributes to the UTP binding site. ATP contacts are provided by residues 14–19 and Asp71; that span reads SLGKGI. Asp71 and Glu144 together coordinate Mg(2+). Residues 151 to 153, 191 to 196, and Lys227 each bind CTP; these read DIE and KTKPTQ. Residues 191–196 and Lys227 each bind UTP; that span reads KTKPTQ. Residues 295 to 547 enclose the Glutamine amidotransferase type-1 domain; it reads TIGMVGKYVD…VEAALANKQA (253 aa). An L-glutamine-binding site is contributed by Gly356. Cys383 acts as the Nucleophile; for glutamine hydrolysis in catalysis. Residues 384–387, Glu407, and Arg473 each bind L-glutamine; that span reads LGMQ. Active-site residues include His520 and Glu522.

The protein belongs to the CTP synthase family. Homotetramer.

The catalysed reaction is UTP + L-glutamine + ATP + H2O = CTP + L-glutamate + ADP + phosphate + 2 H(+). The enzyme catalyses L-glutamine + H2O = L-glutamate + NH4(+). It carries out the reaction UTP + NH4(+) + ATP = CTP + ADP + phosphate + 2 H(+). It functions in the pathway pyrimidine metabolism; CTP biosynthesis via de novo pathway; CTP from UDP: step 2/2. Allosterically activated by GTP, when glutamine is the substrate; GTP has no effect on the reaction when ammonia is the substrate. The allosteric effector GTP functions by stabilizing the protein conformation that binds the tetrahedral intermediate(s) formed during glutamine hydrolysis. Inhibited by the product CTP, via allosteric rather than competitive inhibition. Functionally, catalyzes the ATP-dependent amination of UTP to CTP with either L-glutamine or ammonia as the source of nitrogen. Regulates intracellular CTP levels through interactions with the four ribonucleotide triphosphates. The protein is CTP synthase of Burkholderia cenocepacia (strain ATCC BAA-245 / DSM 16553 / LMG 16656 / NCTC 13227 / J2315 / CF5610) (Burkholderia cepacia (strain J2315)).